Reading from the N-terminus, the 249-residue chain is Deoxyribose-phosphate aldolase (249 aa).

Aspartate 109 functions as the Proton donor/acceptor in the catalytic mechanism. Lysine 171 serves as the catalytic Schiff-base intermediate with acetaldehyde. The active-site Proton donor/acceptor is the lysine 200.

The protein belongs to the DeoC/FbaB aldolase family. DeoC type 1 subfamily.

It is found in the cytoplasm. It carries out the reaction 2-deoxy-D-ribose 5-phosphate = D-glyceraldehyde 3-phosphate + acetaldehyde. It participates in carbohydrate degradation; 2-deoxy-D-ribose 1-phosphate degradation; D-glyceraldehyde 3-phosphate and acetaldehyde from 2-deoxy-alpha-D-ribose 1-phosphate: step 2/2. Its function is as follows. Catalyzes a reversible aldol reaction between acetaldehyde and D-glyceraldehyde 3-phosphate to generate 2-deoxy-D-ribose 5-phosphate. This chain is Deoxyribose-phosphate aldolase, found in Klebsiella pneumoniae subsp. pneumoniae (strain ATCC 700721 / MGH 78578).